The following is an 81-amino-acid chain: Acyl carrier protein (81 aa).

One can recognise a Carrier domain in the interval 2-80; the sequence is ASKDEILAGL…DAVNFIDNAQ (79 aa). An O-(pantetheine 4'-phosphoryl)serine modification is found at S40.

It belongs to the acyl carrier protein (ACP) family. Post-translationally, 4'-phosphopantetheine is transferred from CoA to a specific serine of apo-ACP by AcpS. This modification is essential for activity because fatty acids are bound in thioester linkage to the sulfhydryl of the prosthetic group.

The protein resides in the cytoplasm. Its pathway is lipid metabolism; fatty acid biosynthesis. In terms of biological role, carrier of the growing fatty acid chain in fatty acid biosynthesis. This chain is Acyl carrier protein, found in Kocuria rhizophila (strain ATCC 9341 / DSM 348 / NBRC 103217 / DC2201).